Consider the following 378-residue polypeptide: Chaperone protein DnaJ (378 aa).

The 66-residue stretch at 5–70 (DYYEVLSVGR…DKKAAYDQFG (66 aa)) folds into the J domain. Residues 133-211 (GLTKELRIPT…CHGEGRVEKS (79 aa)) form a CR-type zinc finger. Zn(2+)-binding residues include C146, C149, C163, C166, C185, C188, C199, and C202. CXXCXGXG motif repeat units follow at residues 146–153 (CDTCDGSG), 163–170 (CGTCHGQG), 185–192 (CPTCHGRG), and 199–206 (CNSCHGEG).

It belongs to the DnaJ family. As to quaternary structure, homodimer. The cofactor is Zn(2+).

The protein localises to the cytoplasm. Functionally, participates actively in the response to hyperosmotic and heat shock by preventing the aggregation of stress-denatured proteins and by disaggregating proteins, also in an autonomous, DnaK-independent fashion. Unfolded proteins bind initially to DnaJ; upon interaction with the DnaJ-bound protein, DnaK hydrolyzes its bound ATP, resulting in the formation of a stable complex. GrpE releases ADP from DnaK; ATP binding to DnaK triggers the release of the substrate protein, thus completing the reaction cycle. Several rounds of ATP-dependent interactions between DnaJ, DnaK and GrpE are required for fully efficient folding. Also involved, together with DnaK and GrpE, in the DNA replication of plasmids through activation of initiation proteins. This chain is Chaperone protein DnaJ, found in Shewanella woodyi (strain ATCC 51908 / MS32).